Here is a 229-residue protein sequence, read N- to C-terminus: Protein-L-isoaspartate O-methyltransferase (229 aa).

Residue serine 65 is part of the active site.

It belongs to the methyltransferase superfamily. L-isoaspartyl/D-aspartyl protein methyltransferase family.

Its subcellular location is the cytoplasm. It carries out the reaction [protein]-L-isoaspartate + S-adenosyl-L-methionine = [protein]-L-isoaspartate alpha-methyl ester + S-adenosyl-L-homocysteine. Its function is as follows. Catalyzes the methyl esterification of L-isoaspartyl residues in peptides and proteins that result from spontaneous decomposition of normal L-aspartyl and L-asparaginyl residues. It plays a role in the repair and/or degradation of damaged proteins. This chain is Protein-L-isoaspartate O-methyltransferase, found in Chlorobium phaeovibrioides (strain DSM 265 / 1930) (Prosthecochloris vibrioformis (strain DSM 265)).